Here is a 198-residue protein sequence, read N- to C-terminus: Large ribosomal subunit protein uL5 (198 aa).

The protein belongs to the universal ribosomal protein uL5 family. In terms of assembly, part of the 50S ribosomal subunit; part of the 5S rRNA/L5/L18/L25 subcomplex. Contacts the 5S rRNA and the P site tRNA. Forms a bridge to the 30S subunit in the 70S ribosome.

Functionally, this is one of the proteins that bind and probably mediate the attachment of the 5S RNA into the large ribosomal subunit, where it forms part of the central protuberance. In the 70S ribosome it contacts protein S13 of the 30S subunit (bridge B1b), connecting the 2 subunits; this bridge is implicated in subunit movement. Contacts the P site tRNA; the 5S rRNA and some of its associated proteins might help stabilize positioning of ribosome-bound tRNAs. This chain is Large ribosomal subunit protein uL5, found in Chlorobium phaeovibrioides (strain DSM 265 / 1930) (Prosthecochloris vibrioformis (strain DSM 265)).